We begin with the raw amino-acid sequence, 516 residues long: MTEPNRAQAAPASPTAELPAADENKIIAERREKLAALRRQGVAFPNDFRPTHQAAALHEQYGETDQPALEATPVEVAIAGRMMLKRVMGKASFATVQDGSGQIQFYITRDKVGEDVYAAFKHWDLGDIISARGVLFRTNKGELSVQVQELRLLSKSLRPLPDKFHGLADQEMKYRQRYVDLIVSPETRNTFRARTKAMSSLRRHMSDAGFMEVETPMLHPIPGGAAAKPFITHHNALDMQMFMRIAPELYLKRLIVGGFERVFEINRNFRNEGVSPRHNPEFTMMEFYAAYTDYRWLMDFTENLIRQAAIDASGTAVLTYQGRELDLSKPFHRLTICQAIQKFAPQYTDAQLADADFLRTELKKFGVNTSAPQFLNAGIGTLQLVLFEETAESQLWEPTFIVDYPVEVSPLARASDTVPGITERFELFITGREIANGFSELNDAEDQADRFRKQVEQKDAGDEEAMYYDADYIRALEYGMPPTGGCGIGIDRLVMLLTDSPNIRDVILFPHLRRED.

The tract at residues 1 to 23 (MTEPNRAQAAPASPTAELPAADE) is disordered. Mg(2+) is bound by residues Glu-426 and Glu-433.

It belongs to the class-II aminoacyl-tRNA synthetase family. As to quaternary structure, homodimer. It depends on Mg(2+) as a cofactor.

The protein localises to the cytoplasm. It carries out the reaction tRNA(Lys) + L-lysine + ATP = L-lysyl-tRNA(Lys) + AMP + diphosphate. In Cupriavidus pinatubonensis (strain JMP 134 / LMG 1197) (Cupriavidus necator (strain JMP 134)), this protein is Lysine--tRNA ligase.